A 329-amino-acid chain; its full sequence is Phosphate acyltransferase (329 aa).

The protein belongs to the PlsX family. Homodimer. Probably interacts with PlsY.

The protein localises to the cytoplasm. The enzyme catalyses a fatty acyl-[ACP] + phosphate = an acyl phosphate + holo-[ACP]. The protein operates within lipid metabolism; phospholipid metabolism. Its function is as follows. Catalyzes the reversible formation of acyl-phosphate (acyl-PO(4)) from acyl-[acyl-carrier-protein] (acyl-ACP). This enzyme utilizes acyl-ACP as fatty acyl donor, but not acyl-CoA. This Campylobacter lari (strain RM2100 / D67 / ATCC BAA-1060) protein is Phosphate acyltransferase.